Reading from the N-terminus, the 517-residue chain is Bifunctional purine biosynthesis protein PurH (517 aa).

An MGS-like domain is found at 1 to 145 (MSPLALVSVS…KNHADVAVLV (145 aa)).

Belongs to the PurH family.

It catalyses the reaction (6R)-10-formyltetrahydrofolate + 5-amino-1-(5-phospho-beta-D-ribosyl)imidazole-4-carboxamide = 5-formamido-1-(5-phospho-D-ribosyl)imidazole-4-carboxamide + (6S)-5,6,7,8-tetrahydrofolate. The enzyme catalyses IMP + H2O = 5-formamido-1-(5-phospho-D-ribosyl)imidazole-4-carboxamide. It functions in the pathway purine metabolism; IMP biosynthesis via de novo pathway; 5-formamido-1-(5-phospho-D-ribosyl)imidazole-4-carboxamide from 5-amino-1-(5-phospho-D-ribosyl)imidazole-4-carboxamide (10-formyl THF route): step 1/1. Its pathway is purine metabolism; IMP biosynthesis via de novo pathway; IMP from 5-formamido-1-(5-phospho-D-ribosyl)imidazole-4-carboxamide: step 1/1. The sequence is that of Bifunctional purine biosynthesis protein PurH from Prochlorococcus marinus (strain MIT 9515).